Here is a 198-residue protein sequence, read N- to C-terminus: MKIDVDYAIAQYAQGLFLMADDRHGLGWYSSDRHALIPLDDQFRYPKSLQRVLNQNRFQVKINQAFTAVCEGCAARPETWISQELIEVYHTFHVAGWAHSFETWHGDRLAGGILGIAIRGAFIGESMFYTIPEASKVAMVKLVQHLRQRSYQLFDAQLQNPHLKRFGAYEVEEKAYKKQLEKALNYRCHFTSEPDLYD.

This sequence belongs to the L/F-transferase family.

The protein localises to the cytoplasm. The enzyme catalyses N-terminal L-lysyl-[protein] + L-leucyl-tRNA(Leu) = N-terminal L-leucyl-L-lysyl-[protein] + tRNA(Leu) + H(+). The catalysed reaction is N-terminal L-arginyl-[protein] + L-leucyl-tRNA(Leu) = N-terminal L-leucyl-L-arginyl-[protein] + tRNA(Leu) + H(+). It carries out the reaction L-phenylalanyl-tRNA(Phe) + an N-terminal L-alpha-aminoacyl-[protein] = an N-terminal L-phenylalanyl-L-alpha-aminoacyl-[protein] + tRNA(Phe). Functions in the N-end rule pathway of protein degradation where it conjugates Leu, Phe and, less efficiently, Met from aminoacyl-tRNAs to the N-termini of proteins containing an N-terminal arginine or lysine. In Synechocystis sp. (strain ATCC 27184 / PCC 6803 / Kazusa), this protein is Leucyl/phenylalanyl-tRNA--protein transferase.